The primary structure comprises 348 residues: Holliday junction branch migration complex subunit RuvB (348 aa).

The span at M1–R10 shows a compositional bias: low complexity. The interval M1–L37 is disordered. The tract at residues P13 to Y198 is large ATPase domain (RuvB-L). Positions 37, 38, 79, 82, 83, 84, 188, 198, and 235 each coordinate ATP. T83 is a Mg(2+) binding site. Residues G199–R271 form a small ATPAse domain (RuvB-S) region. Residues H274–A348 are head domain (RuvB-H). DNA contacts are provided by R329 and R334.

The protein belongs to the RuvB family. In terms of assembly, homohexamer. Forms an RuvA(8)-RuvB(12)-Holliday junction (HJ) complex. HJ DNA is sandwiched between 2 RuvA tetramers; dsDNA enters through RuvA and exits via RuvB. An RuvB hexamer assembles on each DNA strand where it exits the tetramer. Each RuvB hexamer is contacted by two RuvA subunits (via domain III) on 2 adjacent RuvB subunits; this complex drives branch migration. In the full resolvosome a probable DNA-RuvA(4)-RuvB(12)-RuvC(2) complex forms which resolves the HJ.

It localises to the cytoplasm. The catalysed reaction is ATP + H2O = ADP + phosphate + H(+). Functionally, the RuvA-RuvB-RuvC complex processes Holliday junction (HJ) DNA during genetic recombination and DNA repair, while the RuvA-RuvB complex plays an important role in the rescue of blocked DNA replication forks via replication fork reversal (RFR). RuvA specifically binds to HJ cruciform DNA, conferring on it an open structure. The RuvB hexamer acts as an ATP-dependent pump, pulling dsDNA into and through the RuvAB complex. RuvB forms 2 homohexamers on either side of HJ DNA bound by 1 or 2 RuvA tetramers; 4 subunits per hexamer contact DNA at a time. Coordinated motions by a converter formed by DNA-disengaged RuvB subunits stimulates ATP hydrolysis and nucleotide exchange. Immobilization of the converter enables RuvB to convert the ATP-contained energy into a lever motion, pulling 2 nucleotides of DNA out of the RuvA tetramer per ATP hydrolyzed, thus driving DNA branch migration. The RuvB motors rotate together with the DNA substrate, which together with the progressing nucleotide cycle form the mechanistic basis for DNA recombination by continuous HJ branch migration. Branch migration allows RuvC to scan DNA until it finds its consensus sequence, where it cleaves and resolves cruciform DNA. The polypeptide is Holliday junction branch migration complex subunit RuvB (Synechococcus sp. (strain CC9605)).